Reading from the N-terminus, the 266-residue chain is Hydroxyethylthiazole kinase (266 aa).

Substrate is bound at residue methionine 43. ATP-binding residues include arginine 119 and threonine 166. Glycine 193 lines the substrate pocket.

The protein belongs to the Thz kinase family. The cofactor is Mg(2+).

The enzyme catalyses 5-(2-hydroxyethyl)-4-methylthiazole + ATP = 4-methyl-5-(2-phosphooxyethyl)-thiazole + ADP + H(+). It functions in the pathway cofactor biosynthesis; thiamine diphosphate biosynthesis; 4-methyl-5-(2-phosphoethyl)-thiazole from 5-(2-hydroxyethyl)-4-methylthiazole: step 1/1. Its function is as follows. Catalyzes the phosphorylation of the hydroxyl group of 4-methyl-5-beta-hydroxyethylthiazole (THZ). The polypeptide is Hydroxyethylthiazole kinase (Methanococcus maripaludis (strain DSM 14266 / JCM 13030 / NBRC 101832 / S2 / LL)).